The chain runs to 552 residues: Putative acetolactate synthase large subunit IlvB2 (552 aa).

Thiamine diphosphate is bound at residue Glu-48. Residues 262 to 285 (FGDGRADEYLFDTPCDLLIAVGVS) and 309 to 328 (DPDPSAVGRFVATSLGITTS) contribute to the FAD site. The interval 394 to 474 (TCISWTFRGI…VTWAVLNDGQ (81 aa)) is thiamine pyrophosphate binding. Asp-445 contacts Mg(2+).

It belongs to the TPP enzyme family. As to quaternary structure, heterodimer of large catalytic subunit and small regulatory subunit. Mg(2+) is required as a cofactor. Thiamine diphosphate serves as cofactor.

It catalyses the reaction 2 pyruvate + H(+) = (2S)-2-acetolactate + CO2. The protein operates within amino-acid biosynthesis; L-isoleucine biosynthesis; L-isoleucine from 2-oxobutanoate: step 1/4. It functions in the pathway amino-acid biosynthesis; L-valine biosynthesis; L-valine from pyruvate: step 1/4. Catalyzes the conversion of 2 pyruvate molecules into acetolactate in the first common step of the biosynthetic pathway of the branched-amino acids such as leucine, isoleucine, and valine. The protein is Putative acetolactate synthase large subunit IlvB2 (ilvB2) of Mycobacterium tuberculosis (strain ATCC 25618 / H37Rv).